The chain runs to 88 residues: Small ribosomal subunit protein bS18B (88 aa).

The protein belongs to the bacterial ribosomal protein bS18 family. As to quaternary structure, part of the 30S ribosomal subunit. Forms a tight heterodimer with protein bS6.

Its function is as follows. Binds as a heterodimer with protein bS6 to the central domain of the 16S rRNA, where it helps stabilize the platform of the 30S subunit. This Roseiflexus castenholzii (strain DSM 13941 / HLO8) protein is Small ribosomal subunit protein bS18B.